The sequence spans 744 residues: MATSITAGLQKAQQAVQDTATKNKKIVDISHDTVNVHTDQEQRTDFGVAITDPDHWLRVTNETHSGPSLLEDHIARERIHRFDHERIPERVVHARGTGAYGNFTLKESIEDLTYAGVLTDTSRNTPVFVRFSTVQGSRGSADTVRDVRGFAVKFYTDEGNWDIVGNNIPVFFIQDAIKFPDFVHAVKPEPHNEVPQAQTAHNNFWDFVYLHPEATHMFMWAMSDRAIPRSYRMMQGFGVNTFSLVNKEGKRHFVKFHWIPHLGVHSLVWDEALKLAGQDPDFHRKDLMEAIDNKAYPKWDFAIQAIPEEDQDKFEFDIFDATKVWPEEQVPLRVVGELELNRNIDEFFPETEQVAFCTSHIVPGIDFSDDPLLQGRNFSYQDTQISRLGVNWEEIPINRPVCPFLNHNRDGAKRHRITKGTVNYWPNRFEANPPASDKGFKSHPAPITGRKRRDLTPKFKEYHNQAQLFYNSLSEVEKVHVKKAFSFELDHCDDPIVYERLAGQRLAEIDLPLAQAVAEMVGAPIPTKALRDNHGKTSVRLSQFDFTPKAPGIISRRIAIIIGDGYDKIAFNGMKAAILAAQALPFVIGTKRSAIYAQGEDKNSSKGVIPDHMYDGMRSTMFDATFIPGGSHIETLQKNGQIRYWIAETFGHLKALGAMGEAAQLVKEVLGNVMGVQIAGADSAEPVEWYGVVTARGPESAESLSEGFKVLKDAGDFTSKFFYQISQHRNWQRELDGLASTVAF.

Residues histidine 93 and asparagine 166 contribute to the active site. Heme is bound at residue tyrosine 380.

Belongs to the catalase family. The cofactor is heme.

Its subcellular location is the peroxisome matrix. It carries out the reaction 2 H2O2 = O2 + 2 H2O. Catalyzes the degradation of hydrogen peroxide (H(2)O(2)) generated by peroxisomal oxidases to water and oxygen, thereby protecting cells from the toxic effects of hydrogen peroxide. This is Catalase A (catA) from Emericella nidulans (strain FGSC A4 / ATCC 38163 / CBS 112.46 / NRRL 194 / M139) (Aspergillus nidulans).